A 91-amino-acid polypeptide reads, in one-letter code: Gene 76 protein (91 aa).

Residues 58 to 81 form a disordered region; that stretch reads ELPSCDESPKGEARRDNDNRDGGK.

The polypeptide is Gene 76 protein (76) (Mycobacterium phage L5 (Mycobacteriophage L5)).